A 321-amino-acid polypeptide reads, in one-letter code: Beta-lactamase (321 aa).

The signal sequence occupies residues 1-30 (MEKNRKKQIVVLSIALVCIFILVFSLFHKS). Ser83 serves as the catalytic Acyl-ester intermediate. Residue 233 to 235 (KTG) participates in substrate binding.

The protein belongs to the class-A beta-lactamase family.

It catalyses the reaction a beta-lactam + H2O = a substituted beta-amino acid. Inhibited by clavulanic acid. Can hydrolyze cephalosporins, penicillins and also cefoxitin; but at a slow rate. The chain is Beta-lactamase (cfxA) from Phocaeicola vulgatus (Bacteroides vulgatus).